The sequence spans 107 residues: High mobility group protein HMG-I/HMG-Y (107 aa).

Residues 1 to 107 (MSESSSKSSQ…ISQESSEEEQ (107 aa)) form a disordered region. At S2 the chain carries N-acetylserine. Residue K7 is modified to N6-acetyllysine. An ADP-ribosylserine modification is found at S8. S9 carries the post-translational modification ADP-ribosylserine; alternate. A Phosphoserine; alternate modification is found at S9. N6-acetyllysine; alternate is present on K15. Residue K15 forms a Glycyl lysine isopeptide (Lys-Gly) (interchain with G-Cter in SUMO2); alternate linkage. Basic and acidic residues predominate over residues 15–24 (KQEKDGTEKR). A DNA-binding region (a.T hook 1) is located at residues 21-31 (TEKRGRGRPRK). R26 is modified (asymmetric dimethylarginine; alternate). R26 bears the Omega-N-methylarginine; alternate mark. A Symmetric dimethylarginine; alternate modification is found at R26. Residue S36 is modified to Phosphoserine; by HIPK2 and CDC2. 2 positions are modified to phosphothreonine: T39 and V42. Residues S44 and S49 each carry the phosphoserine modification. The residue at position 53 (T53) is a Phosphothreonine; by HIPK2 and CDC2. The segment at residues 53–63 (TPKRPRGRPKG) is a DNA-binding region (a.T hook 2). The interaction with HIPK2 stretch occupies residues 53–77 (TPKRPRGRPKGSKNKGAAKTRKTTT). Residues 55–74 (KRPRGRPKGSKNKGAAKTRK) are compositionally biased toward basic residues. R58 and R60 each carry asymmetric dimethylarginine; by PRMT6; alternate. Residues R58 and R60 each carry the omega-N-methylarginine; by PRMT6; alternate modification. K67 carries the post-translational modification Phosphothreonine. Position 78 is a phosphothreonine; by HIPK2 and CDC2 (T78). The segment at residues 78-89 (TPGRKPRGRPKK) is a DNA-binding region (a.T hook 3). Over residues 93–107 (EEEEGISQESSEEEQ) the composition is skewed to acidic residues. The residue at position 99 (S99) is a Phosphoserine. 2 positions are modified to phosphoserine; by CK: S102 and S103.

The protein belongs to the HMGA family. Interacts with HIPK2. In terms of processing, constitutively phosphorylated on two or three sites. Hyperphosphorylated at early stages of apoptosis, followed by dephosphorylation and methylation, which coincides with chromatin condensation. Isoforms HMG-I and HMG-Y can be phosphorylated by HIPK2. Phosphorylation of HMG-I at Ser-36, Thr-53 and Thr-78 and of HMG-Y at Thr-42 and Thr-67 by HIPK2 modulates DNA-binding affinity. HMG-Y is not methylated. Post-translationally, methylation at Arg-58 is mutually exclusive with methylation at Arg-60.

Its subcellular location is the nucleus. The protein resides in the chromosome. Functionally, HMG-I/Y bind preferentially to the minor groove of A+T rich regions in double-stranded DNA. It is suggested that these proteins could function in nucleosome phasing and in the 3'-end processing of mRNA transcripts. They are also involved in the transcription regulation of genes containing, or in close proximity to A+T-rich regions. This Homo sapiens (Human) protein is High mobility group protein HMG-I/HMG-Y (HMGA1).